The sequence spans 232 residues: MKKIMSAFVGMVLLTIFCFSPQASAAYDDLHEGYATYTGSGYSGGAFLLDPIPSDMEITAINPADLNYGGVKAALAGSYLEVEGPKGKTTVYVTDLYPEGARGALDLSPNAFRKIGNMKDGKINIKWRVVKAPITGNFTYRIKEGSSRWWAAIQVRNHKYPVMKMEYEKDGKWINMEKMDYNHFVSTNLGTGSLKVRMTDIRGKVVKDTIPKLPESGTSKAYTVPGHVQFPE.

An N-terminal signal peptide occupies residues 1-25; that stretch reads MKKIMSAFVGMVLLTIFCFSPQASA. The Expansin-like EG45 domain maps to 58–127; the sequence is ITAINPADLN…MKDGKINIKW (70 aa).

The protein resides in the secreted. It is found in the cell wall. Its function is as follows. May promote colonization of plant roots. May cause loosening and extension of plant cell walls by disrupting non-covalent bonding between cellulose microfibrils and matrix glucans. Has very low expansin activity (in vitro). No enzymatic activity has been found. Binds to peptidoglycan and to plant cell walls. This chain is Expansin-YoaJ (yoaJ), found in Bacillus subtilis (strain 168).